A 268-amino-acid polypeptide reads, in one-letter code: MNITAIRNEQNQQPLIQLKNINVVFAQKTALQDINLNIYPNSIITIVGPNGGGKSTLLKTLLKLQTPTSGEVIYSKNVRIGYVPQKIHLDHSLPITVERFLSLKKGIKTQEISTALEQLSISHLRKNNMQKLSGGEMQRVLLARAILNKPNLLVLDEPTQGVDITGQAELYQLIHQTQQKLNCAVLMVSHDLHIVMADSKEVLCINQHICCAGTPDVLSNDPTFMRLWGNQIAQNVGFYTHHHNHHHTLHGDVCGCNSSAVHCQNKDK.

Residues 16 to 231 (IQLKNINVVF…PTFMRLWGNQ (216 aa)) form the ABC transporter domain. 48–55 (GPNGGGKS) serves as a coordination point for ATP.

Belongs to the ABC transporter superfamily. Zinc importer (TC 3.A.1.15.5) family. The complex is composed of two ATP-binding proteins (ZnuC), two transmembrane proteins (ZnuB) and a solute-binding protein (ZnuA).

Its subcellular location is the cell inner membrane. The enzyme catalyses Zn(2+)(out) + ATP(in) + H2O(in) = Zn(2+)(in) + ADP(in) + phosphate(in) + H(+)(in). Functionally, part of the ABC transporter complex ZnuABC involved in zinc import. Responsible for energy coupling to the transport system. This Haemophilus influenzae (strain ATCC 51907 / DSM 11121 / KW20 / Rd) protein is Zinc import ATP-binding protein ZnuC.